The chain runs to 243 residues: Probable sentrin-specific protease 8 (243 aa).

The tract at residues 12–185 is protease; it reads SAIYQSDINI…LYVLSIIEEL (174 aa). Residues H109 and D126 contribute to the active site. Catalysis depends on C174, which acts as the Nucleophile.

The protein belongs to the peptidase C48 family.

Functionally, protease that catalyzes two essential functions in the nedd8 pathway: processing of full-length nedd8 to its mature form and deconjugation of nedd8 from targeted proteins. The chain is Probable sentrin-specific protease 8 (senp8) from Dictyostelium discoideum (Social amoeba).